We begin with the raw amino-acid sequence, 78 residues long: Delta-conotoxin TxVIA (78 aa).

Positions 1–22 (MKLTCMMIVAVLFLTAWTFATA) are cleaved as a signal peptide. The propeptide occupies 23–49 (DDSGNGLENLFSNAHHQMKNPEASKLN). Disulfide bonds link C53–C68, C60–C72, and C67–C77. The residue at position 59 (M59) is a Methionine sulfoxide; partial.

This sequence belongs to the conotoxin O1 superfamily. In terms of tissue distribution, expressed by the venom duct. Is present in all duct parts with a highest content in part 4 (distal part near the pharynx).

Its subcellular location is the secreted. In terms of biological role, delta-conotoxins bind to site 6 of voltage-gated sodium channels (Nav) and inhibit the inactivation process. Binding of this toxin is strongly calcium-dependent but not voltage-dependent. The binding site is most likely on the extracellular side of the sodium channel. Binds receptor sites on both mollusk and rat central nervous system, but despite its high affinity binding to rat sodium channel, it has no functional effect in vivo and in vitro on it. Also has no effect on Gambusia fish. Is important in mollusk for the paralysis of the prey. Upon injection of the peptide, a subordinate lobster assumes an exaggerated dominant posture (of a 'King-Kong' lobster!). In Conus textile (Cloth-of-gold cone), this protein is Delta-conotoxin TxVIA.